The following is a 534-amino-acid chain: ATP synthase subunit beta 2 (534 aa).

A compositionally biased stretch (polar residues) spans 1 to 10 (MADPQATNGT). The disordered stretch occupies residues 1–30 (MADPQATNGTGAACAERDASDVGDVSDVGD). ATP is bound at residue 185–192 (GGAGVGKT). Positions 494-505 (AAAREADARREA) are enriched in basic and acidic residues. The segment at 494–534 (AAAREADARREAAAAASGAGPGTTSDPASGSAEPQGARHGR) is disordered.

It belongs to the ATPase alpha/beta chains family. As to quaternary structure, F-type ATPases have 2 components, CF(1) - the catalytic core - and CF(0) - the membrane proton channel. CF(1) has five subunits: alpha(3), beta(3), gamma(1), delta(1), epsilon(1). CF(0) has three main subunits: a(1), b(2) and c(9-12). The alpha and beta chains form an alternating ring which encloses part of the gamma chain. CF(1) is attached to CF(0) by a central stalk formed by the gamma and epsilon chains, while a peripheral stalk is formed by the delta and b chains.

It localises to the cell inner membrane. It carries out the reaction ATP + H2O + 4 H(+)(in) = ADP + phosphate + 5 H(+)(out). In terms of biological role, produces ATP from ADP in the presence of a proton gradient across the membrane. The catalytic sites are hosted primarily by the beta subunits. This chain is ATP synthase subunit beta 2, found in Burkholderia pseudomallei (strain 668).